The sequence spans 275 residues: Formamidopyrimidine-DNA glycosylase (275 aa).

Pro2 serves as the catalytic Schiff-base intermediate with DNA. Catalysis depends on Glu3, which acts as the Proton donor. Lys59 functions as the Proton donor; for beta-elimination activity in the catalytic mechanism. The DNA site is built by His92, Arg111, and Arg155. Residues 240–274 (NVYGRAGKACPKCGTTIEKQVLGQRSSYYCPQCQR) form an FPG-type zinc finger. Arg264 functions as the Proton donor; for delta-elimination activity in the catalytic mechanism.

It belongs to the FPG family. In terms of assembly, monomer. Requires Zn(2+) as cofactor.

It catalyses the reaction Hydrolysis of DNA containing ring-opened 7-methylguanine residues, releasing 2,6-diamino-4-hydroxy-5-(N-methyl)formamidopyrimidine.. It carries out the reaction 2'-deoxyribonucleotide-(2'-deoxyribose 5'-phosphate)-2'-deoxyribonucleotide-DNA = a 3'-end 2'-deoxyribonucleotide-(2,3-dehydro-2,3-deoxyribose 5'-phosphate)-DNA + a 5'-end 5'-phospho-2'-deoxyribonucleoside-DNA + H(+). Functionally, involved in base excision repair of DNA damaged by oxidation or by mutagenic agents. Acts as a DNA glycosylase that recognizes and removes damaged bases. Has a preference for oxidized purines, such as 7,8-dihydro-8-oxoguanine (8-oxoG). Has AP (apurinic/apyrimidinic) lyase activity and introduces nicks in the DNA strand. Cleaves the DNA backbone by beta-delta elimination to generate a single-strand break at the site of the removed base with both 3'- and 5'-phosphates. This is Formamidopyrimidine-DNA glycosylase from Magnetococcus marinus (strain ATCC BAA-1437 / JCM 17883 / MC-1).